The primary structure comprises 95 residues: ESAT-6-like protein EsxA (95 aa).

This sequence belongs to the WXG100 family. ESAT-6 subfamily. In terms of assembly, forms a tight 1:1 complex with EsxB.

The sequence is that of ESAT-6-like protein EsxA from Corynebacterium diphtheriae (strain ATCC 700971 / NCTC 13129 / Biotype gravis).